A 169-amino-acid polypeptide reads, in one-letter code: Disulfide bond formation protein B 1 (169 aa).

The Cytoplasmic segment spans residues 1–14; that stretch reads MSDDRLGLGRERRF. A helical transmembrane segment spans residues 15–31; it reads LVLLGIICLALIGGALY. Residues 32-49 are Periplasmic-facing; the sequence is MQVVLGEAPCPLCILQRY. A disulfide bond links Cys41 and Cys44. A helical transmembrane segment spans residues 50–64; the sequence is ALLLIALFAFIGAAM. The Cytoplasmic portion of the chain corresponds to 65 to 71; that stretch reads SSRRGVT. A helical membrane pass occupies residues 72 to 89; that stretch reads VMETLVVICALAGAGVAG. Residues 90 to 144 lie on the Periplasmic side of the membrane; that stretch reads HHVYTQFYPSVSCGIDVLQPIVDSLPLAKIFPLGFQVDGFCSTPYPPILGLSLAQ. A disulfide bridge links Cys102 with Cys130. A helical transmembrane segment spans residues 145–163; it reads WALVAFVLTVILVPLGVVR. Over 164–169 the chain is Cytoplasmic; it reads NRKKTY.

The protein belongs to the DsbB family.

It localises to the cell inner membrane. Functionally, required for disulfide bond formation in some periplasmic proteins. Acts by oxidizing the DsbA protein. This chain is Disulfide bond formation protein B 1, found in Pseudomonas fluorescens (strain ATCC BAA-477 / NRRL B-23932 / Pf-5).